A 245-amino-acid chain; its full sequence is Superoxide dismutase [Mn], mitochondrial (245 aa).

Residues methionine 1 to alanine 32 constitute a mitochondrion transit peptide. Positions 58, 106, 196, and 200 each coordinate Mn(2+).

The protein belongs to the iron/manganese superoxide dismutase family. In terms of assembly, homotetramer. Requires Mn(2+) as cofactor.

The protein localises to the mitochondrion matrix. It carries out the reaction 2 superoxide + 2 H(+) = H2O2 + O2. Its function is as follows. Destroys superoxide anion radicals which are normally produced within the cells and which are toxic to biological systems. This Neurospora crassa (strain ATCC 24698 / 74-OR23-1A / CBS 708.71 / DSM 1257 / FGSC 987) protein is Superoxide dismutase [Mn], mitochondrial (sod-2).